A 439-amino-acid polypeptide reads, in one-letter code: Adenylosuccinate synthetase (439 aa).

Residues 12 to 18 and 40 to 42 each bind GTP; these read GDEGKGK and GHT. Asp-13 functions as the Proton acceptor in the catalytic mechanism. Asp-13 and Gly-40 together coordinate Mg(2+). IMP contacts are provided by residues 13–16, 38–41, Thr-137, Arg-151, Gln-232, Thr-247, and Arg-311; these read DEGK and NAGH. The active-site Proton donor is the His-41. Residue 307-313 coordinates substrate; sequence ATTGRPR. GTP contacts are provided by residues Arg-313, 339-341, and 421-423; these read KLD and SNG.

The protein belongs to the adenylosuccinate synthetase family. As to quaternary structure, homodimer. Requires Mg(2+) as cofactor.

The protein resides in the cytoplasm. It catalyses the reaction IMP + L-aspartate + GTP = N(6)-(1,2-dicarboxyethyl)-AMP + GDP + phosphate + 2 H(+). Its pathway is purine metabolism; AMP biosynthesis via de novo pathway; AMP from IMP: step 1/2. Functionally, plays an important role in the de novo pathway of purine nucleotide biosynthesis. Catalyzes the first committed step in the biosynthesis of AMP from IMP. The chain is Adenylosuccinate synthetase from Salinibacter ruber (strain DSM 13855 / M31).